Here is a 179-residue protein sequence, read N- to C-terminus: Inner membrane-spanning protein YciB (179 aa).

5 helical membrane passes run 24-44, 49-69, 76-96, 121-141, and 151-171; these read TATGVLMAATVLQMGIIYAME, AMQKATLVLILLFGTLTLVLH, WKPTVLYGAMAIALAVALWAL, VAWIGYCLFMAAINGYVAAYF, and LWGYVFPIVFLVAQGLYISPH.

The protein belongs to the YciB family.

It is found in the cell inner membrane. Its function is as follows. Plays a role in cell envelope biogenesis, maintenance of cell envelope integrity and membrane homeostasis. The sequence is that of Inner membrane-spanning protein YciB from Variovorax paradoxus (strain S110).